The primary structure comprises 308 residues: tRNA dimethylallyltransferase (308 aa).

10 to 17 (GPTASGKT) is an ATP binding site. Residue 12–17 (TASGKT) participates in substrate binding. 2 interaction with substrate tRNA regions span residues 35-38 (DSSL) and 159-163 (QRIFR).

The protein belongs to the IPP transferase family. As to quaternary structure, monomer. Mg(2+) serves as cofactor.

The catalysed reaction is adenosine(37) in tRNA + dimethylallyl diphosphate = N(6)-dimethylallyladenosine(37) in tRNA + diphosphate. In terms of biological role, catalyzes the transfer of a dimethylallyl group onto the adenine at position 37 in tRNAs that read codons beginning with uridine, leading to the formation of N6-(dimethylallyl)adenosine (i(6)A). This chain is tRNA dimethylallyltransferase, found in Francisella tularensis subsp. novicida (strain U112).